A 625-amino-acid chain; its full sequence is Alpha-amylase 1 (625 aa).

An N-terminal signal peptide occupies residues 1–22 (MGFSKIALFSLFALFGLPTSLA). Cysteines 51 and 59 form a disulfide. W105 contributes to the substrate binding site. Residue N143 participates in Ca(2+) binding. N153, N163, and N180 each carry an N-linked (GlcNAc...) asparagine glycan. C172 and C187 are disulfide-bonded. E185 and D198 together coordinate Ca(2+). R227 serves as a coordination point for substrate. D229 is a binding site for Ca(2+). D229 (nucleophile) is an active-site residue. A substrate-binding site is contributed by 232-233 (KQ). N-linked (GlcNAc...) asparagine glycosylation is present at N241. Residue E253 participates in Ca(2+) binding. E253 acts as the Proton donor in catalysis. N-linked (GlcNAc...) asparagine glycosylation is found at N260 and N286. A disulfide bridge connects residues C263 and C306. D322 serves as a coordination point for substrate. An N-linked (GlcNAc...) asparagine glycan is attached at N331. R370 lines the substrate pocket. N440 and N461 each carry an N-linked (GlcNAc...) asparagine glycan. The tract at residues 526–579 (SATSSSKSSSSSSSRSGSSSSSSSRSGSTSSSGSSHTITSTSQSVHTSGSSTST) is disordered. S603 carries the GPI-anchor amidated serine lipid modification. Positions 604–625 (SANAVRVSILGVAAFIAIVLFI) are cleaved as a propeptide — removed in mature form.

The protein belongs to the glycosyl hydrolase 13 family. It depends on Ca(2+) as a cofactor.

It localises to the cell membrane. It catalyses the reaction Endohydrolysis of (1-&gt;4)-alpha-D-glucosidic linkages in polysaccharides containing three or more (1-&gt;4)-alpha-linked D-glucose units.. In Schizosaccharomyces pombe (strain 972 / ATCC 24843) (Fission yeast), this protein is Alpha-amylase 1 (aah1).